The sequence spans 498 residues: PHD finger protein 10 (498 aa).

A compositionally biased stretch (low complexity) spans 1 to 10; the sequence is MAAAAGPGAA. Residues 1–62 form a disordered region; sequence MAAAAGPGAA…SSRSCETSSQ (62 aa). At alanine 2 the chain carries N-acetylalanine. Phosphoserine occurs at positions 12, 36, and 50. The essential to induce neural progenitor proliferation stretch occupies residues 89–185; sequence MLQEQVSEYL…HYKEYSQMQQ (97 aa). Residues 89–295 form an SAY region; that stretch reads MLQEQVSEYL…PPLDPELPAL (207 aa). Lysine 241 is covalently cross-linked (Glycyl lysine isopeptide (Lys-Gly) (interchain with G-Cter in SUMO2)). Serine 270 is modified (phosphoserine). Positions 285–296 are enriched in low complexity; sequence EPPLDPELPALD. Positions 285-368 are disordered; it reads EPPLDPELPA…KRSVLSKSVP (84 aa). The essential to induce neural progenitor proliferation stretch occupies residues 292–334; sequence LPALDSDGDSDDGEDGRGDEKRKNKGTSDSSSGNVSEGESPPD. A phosphoserine mark is found at serine 297, serine 301, serine 327, and serine 331. A compositionally biased stretch (polar residues) spans 318-328; that stretch reads TSDSSSGNVSE. Basic and acidic residues predominate over residues 345–359; that stretch reads KSKDKAATPRKDGPK. The PHD-type 1; degenerate zinc finger occupies 379 to 436; it reads ICGICLKGKESNKKGKAESLIHCSQCENSGHPSCLDMTMELVSMIKTYPWQCMECKTC. Lysine 385 participates in a covalent cross-link: Glycyl lysine isopeptide (Lys-Gly) (interchain with G-Cter in SUMO2). A PHD-type 2; degenerate zinc finger spans residues 438–481; it reads ICGQPHHEEEMMFCDMCDRGYHTFCVGLGAIPSGRWICDCCQRA.

The protein belongs to the SAYP family. Component of neural progenitors-specific chromatin remodeling complex (npBAF complex) composed of at least, ARID1A/BAF250A or ARID1B/BAF250B, SMARCD1/BAF60A, SMARCD3/BAF60C, SMARCA2/BRM/BAF190B, SMARCA4/BRG1/BAF190A, SMARCB1/BAF47, SMARCC1/BAF155, SMARCE1/BAF57, SMARCC2/BAF170, PHF10/BAF45A, ACTL6A/BAF53A and actin. Interacts with ACTL6A/BAF53A, SMARCA2/BRM/BAF190B, SMARCA4/BRG1/BAF190A and PBRM1/BAF180.

It localises to the nucleus. Functionally, involved in transcription activity regulation by chromatin remodeling. Belongs to the neural progenitors-specific chromatin remodeling complex (npBAF complex) and is required for the proliferation of neural progenitors. During neural development a switch from a stem/progenitor to a post-mitotic chromatin remodeling mechanism occurs as neurons exit the cell cycle and become committed to their adult state. The transition from proliferating neural stem/progenitor cells to post-mitotic neurons requires a switch in subunit composition of the npBAF and nBAF complexes. As neural progenitors exit mitosis and differentiate into neurons, npBAF complexes which contain ACTL6A/BAF53A and PHF10/BAF45A, are exchanged for homologous alternative ACTL6B/BAF53B and DPF1/BAF45B or DPF3/BAF45C subunits in neuron-specific complexes (nBAF). The npBAF complex is essential for the self-renewal/proliferative capacity of the multipotent neural stem cells. The nBAF complex along with CREST plays a role regulating the activity of genes essential for dendrite growth. In Homo sapiens (Human), this protein is PHD finger protein 10 (PHF10).